The primary structure comprises 765 residues: Beta-glucosidase cel3A (765 aa).

The first 24 residues, 1 to 24 (MRWSSPTSSSLSLVALLLVAHVDA), serve as a signal peptide directing secretion. Residues Asn66, Asn124, Asn250, Asn304, Asn311, Asn349, Asn549, Asn588, Asn657, and Asn681 are each glycosylated (N-linked (GlcNAc...) asparagine).

The protein belongs to the glycosyl hydrolase 3 family.

It is found in the secreted. It catalyses the reaction Hydrolysis of terminal, non-reducing beta-D-glucosyl residues with release of beta-D-glucose.. The protein operates within glycan metabolism; cellulose degradation. Beta-glucosidases are one of a number of cellulolytic enzymes involved in the degradation of cellulosic biomass. Catalyzes the last step releasing glucose from the inhibitory cellobiose. Shows higher activities on cellobiose and cellotriose but lower activities on laminarioligosaccharides and polymers. The polypeptide is Beta-glucosidase cel3A (Pyricularia oryzae (strain 70-15 / ATCC MYA-4617 / FGSC 8958) (Rice blast fungus)).